The chain runs to 223 residues: MPARQSFTDLKNLVLCDIGNTRIHFAQNYQLFSSAKEDLKRLGIQKEIFYISVNEENEKALLNCYPNAKNIAGFFHLETDYVGLGIDRQMACLAVNNGVVVDAGSAITIDLIKEGKHLGGCILPGLAQYIHAYKKSAKILEQPFKALDSLEVLPKSTRDAVNYGMVLSVIACIQHLAKNQKIYLCGGDAKYLSAFLPHSVCKERLVFDGMEIALKKAGILECK.

Residue 17 to 24 (DIGNTRIH) coordinates ATP. Substrate-binding positions include tyrosine 81 and 85 to 88 (GIDR). Catalysis depends on aspartate 87, which acts as the Proton acceptor. Aspartate 102 provides a ligand contact to K(+). Serine 105 contributes to the ATP binding site. Threonine 157 serves as a coordination point for substrate.

This sequence belongs to the type III pantothenate kinase family. As to quaternary structure, homodimer. NH4(+) is required as a cofactor. The cofactor is K(+).

Its subcellular location is the cytoplasm. The catalysed reaction is (R)-pantothenate + ATP = (R)-4'-phosphopantothenate + ADP + H(+). It functions in the pathway cofactor biosynthesis; coenzyme A biosynthesis; CoA from (R)-pantothenate: step 1/5. Not regulated by feedback inhibition by CoA and its thioesters as described for many other pantothenate kinases. Not inhibited by N-pentylpantothenamide (N5-Pan), and this compound cannot act as a substrate either. In terms of biological role, catalyzes the phosphorylation of pantothenate (Pan), the first step in CoA biosynthesis. Can also utilize CTP or GTP instead of ATP as a phosphoryl donor, albeit to a lesser extent. This Helicobacter pylori (strain ATCC 700392 / 26695) (Campylobacter pylori) protein is Type III pantothenate kinase (coaX).